A 156-amino-acid chain; its full sequence is MSRKGPSKKHVVLPDPIYGSTVVAQLINKILLDGKKSIAEDIVYSALDMVKEKTEQEPVAVLKRALDNIRPSLEVRSRRVGGATYQVPVEVKPNRANTLSLRWLTDFSRARREKTMAERLANEILDASNGLGASVKRREDTHKMAEANKAFAHYRW.

This sequence belongs to the universal ribosomal protein uS7 family. Part of the 30S ribosomal subunit. Contacts proteins S9 and S11.

Functionally, one of the primary rRNA binding proteins, it binds directly to 16S rRNA where it nucleates assembly of the head domain of the 30S subunit. Is located at the subunit interface close to the decoding center, probably blocks exit of the E-site tRNA. The sequence is that of Small ribosomal subunit protein uS7 from Bifidobacterium longum subsp. infantis (strain ATCC 15697 / DSM 20088 / JCM 1222 / NCTC 11817 / S12).